The primary structure comprises 939 residues: Translation initiation factor IF-2 (939 aa).

Residues 81–94 show a composition bias toward basic and acidic residues; sequence EEQSRKAYEKEQQL. Disordered regions lie at residues 81-303 and 316-337; these read EEQS…KKVE and TISGMDDSGSSGSRQKFRKMRR. Residues 99-108 are compositionally biased toward low complexity; the sequence is SSAPSPAPAA. Basic and acidic residues-rich tracts occupy residues 112–127 and 148–173; these read EPVKEPFVEIPARHEP and SPKEEVVATKAPEAEAKPVEQPEKAA. The segment covering 178-189 has biased composition (low complexity); the sequence is EAQPEAQSQQEP. Residues 244–255 are compositionally biased toward basic and acidic residues; that stretch reads FKENAAELKDEF. Positions 276-287 are enriched in low complexity; the sequence is AAGEGESTTGGE. Residues 292-301 are compositionally biased toward basic residues; sequence KKKKGKKKKK. A compositionally biased stretch (low complexity) spans 318 to 328; it reads SGMDDSGSSGS. The tr-type G domain maps to 436 to 606; the sequence is TRPPVVTIMG…LTEAEVRELK (171 aa). Residues 445–452 are G1; sequence GHVDHGKT. 445-452 is a binding site for GTP; it reads GHVDHGKT. Residues 470 to 474 form a G2 region; sequence GITQH. The segment at 492–495 is G3; it reads DTPG. Residues 492 to 496 and 546 to 549 each bind GTP; these read DTPGH and NKID. The interval 546-549 is G4; that stretch reads NKID. Residues 582–584 form a G5 region; the sequence is SAK.

Belongs to the TRAFAC class translation factor GTPase superfamily. Classic translation factor GTPase family. IF-2 subfamily.

It localises to the cytoplasm. Its function is as follows. One of the essential components for the initiation of protein synthesis. Protects formylmethionyl-tRNA from spontaneous hydrolysis and promotes its binding to the 30S ribosomal subunits. Also involved in the hydrolysis of GTP during the formation of the 70S ribosomal complex. The polypeptide is Translation initiation factor IF-2 (Chlorobaculum parvum (strain DSM 263 / NCIMB 8327) (Chlorobium vibrioforme subsp. thiosulfatophilum)).